We begin with the raw amino-acid sequence, 554 residues long: Glutamine--tRNA ligase (554 aa).

The 'HIGH' region signature appears at 33-43 (PEPNGYLHIGH). ATP-binding positions include 34–36 (EPN) and 40–46 (HIGHAKS). 2 residues coordinate L-glutamine: aspartate 66 and tyrosine 210. ATP is bound by residues threonine 229, 259–260 (RL), and 267–269 (MSK). Residues 266–270 (VMSKR) carry the 'KMSKS' region motif.

This sequence belongs to the class-I aminoacyl-tRNA synthetase family. In terms of assembly, monomer.

The protein resides in the cytoplasm. The enzyme catalyses tRNA(Gln) + L-glutamine + ATP = L-glutaminyl-tRNA(Gln) + AMP + diphosphate. This chain is Glutamine--tRNA ligase, found in Clostridioides difficile (strain 630) (Peptoclostridium difficile).